Here is a 229-residue protein sequence, read N- to C-terminus: Heptaprenylglyceryl phosphate synthase (229 aa).

Residue K12 coordinates sn-glycerol 1-phosphate. D14 and S40 together coordinate Mg(2+). Sn-glycerol 1-phosphate-binding positions include 159–164 (YLEYSG), G189, and 209–210 (GN).

It belongs to the GGGP/HepGP synthase family. Group I subfamily. As to quaternary structure, homodimer. Mg(2+) is required as a cofactor.

The catalysed reaction is sn-glycerol 1-phosphate + all-trans-heptaprenyl diphosphate = 3-heptaprenyl-sn-glycero-1-phosphate + diphosphate. Its pathway is membrane lipid metabolism; glycerophospholipid metabolism. Prenyltransferase that catalyzes in vivo the transfer of the heptaprenyl moiety of heptaprenyl pyrophosphate (HepPP; 35 carbon atoms) to the C3 hydroxyl of sn-glycerol-1-phosphate (G1P), producing heptaprenylglyceryl phosphate (HepGP). This reaction is an ether-bond-formation step in the biosynthesis of archaea-type G1P-based membrane lipids found in Bacillales. This is Heptaprenylglyceryl phosphate synthase from Bacillus cereus (strain ATCC 14579 / DSM 31 / CCUG 7414 / JCM 2152 / NBRC 15305 / NCIMB 9373 / NCTC 2599 / NRRL B-3711).